The following is a 1185-amino-acid chain: Chromosome partition protein Smc (1185 aa).

32-39 contributes to the ATP binding site; that stretch reads PNGSGKSN. A coiled-coil region spans residues 228 to 503; sequence SRLVKKLTIA…LQAVQERYTN (276 aa). The interval 300–323 is disordered; the sequence is TQGQQGVDAERRQNQQSEQERLTA. The segment covering 307–320 has biased composition (basic and acidic residues); that stretch reads DAERRQNQQSEQER. Residues 519 to 637 enclose the SMC hinge domain; that stretch reads SGVAGAVSEL…VDTLDHAMAI (119 aa). Coiled-coil stretches lie at residues 675–928 and 989–1025; these read QQQQ…RRLE and AIDEFERVKERFDFLNNQASDLTEAKEHLLQTMADLD.

It belongs to the SMC family. In terms of assembly, homodimer.

The protein localises to the cytoplasm. Its function is as follows. Required for chromosome condensation and partitioning. This Lactiplantibacillus plantarum (strain ATCC BAA-793 / NCIMB 8826 / WCFS1) (Lactobacillus plantarum) protein is Chromosome partition protein Smc.